Here is a 515-residue protein sequence, read N- to C-terminus: SWI/SNF-related matrix-associated actin-dependent regulator of chromatin subfamily D member 1 (515 aa).

The interval 1–103 is disordered; it reads MAARAGFQSV…SGMDQSRKRP (103 aa). Residues 14-23 show a composition bias toward gly residues; sequence GGAGASGGAG. The interval 43 to 167 is interaction with ESR1, NR1H4, NR3C1, PGR and SMARCA4; the sequence is APGQGLYRSP…DQTIMRKRLD (125 aa). Residues R68 and R88 each carry the asymmetric dimethylarginine modification. A Glycyl lysine isopeptide (Lys-Gly) (interchain with G-Cter in SUMO2) cross-link involves residue K101. An interaction with SMARCC1 and SMARCC2 region spans residues 168–474; it reads IQEALKRPIK…TMTDVVGNPE (307 aa). Residues 180–515 form a necessary for GR/NR3C1-mediated remodeling and transcription from chromatin; required for GR/NR3C1 interaction with the BRG1/SMARCA4 complex in vivo region; it reads RKLRIFISNT…LEQALGIRNT (336 aa). T203 carries the phosphothreonine modification. K223 is subject to N6-acetyllysine. An SWIB/MDM2 domain is found at 290 to 367; the sequence is YQPPQFKLDP…PQRLHALLMP (78 aa). A coiled-coil region spans residues 412-440; sequence ASQQEIATLDNKIHETIETINQLKTQREF.

It belongs to the SMARCD family. As to quaternary structure, component of the multiprotein chromatin-remodeling complexes SWI/SNF: SWI/SNF-A (BAF), SWI/SNF-B (PBAF) and related complexes. The canonical complex contains a catalytic subunit (either SMARCA4/BRG1/BAF190A or SMARCA2/BRM/BAF190B), and at least SMARCE1, ACTL6A/BAF53, SMARCC1/BAF155, SMARCC2/BAF170, and SMARCB1/SNF5/BAF47. Other subunits specific to each of the complexes may also be present permitting several possible combinations developmentally and tissue specific. Component of the BAF complex, which includes at least actin (ACTB), ARID1A/BAF250A, ARID1B/BAF250B, SMARCA2/BRM, SMARCA4/BRG1/BAF190A, ACTL6A/BAF53, ACTL6B/BAF53B, SMARCE1/BAF57, SMARCC1/BAF155, SMARCC2/BAF170, SMARCB1/SNF5/INI1, and one or more SMARCD1/BAF60A, SMARCD2/BAF60B, or SMARCD3/BAF60C. In muscle cells, the BAF complex also contains DPF3. Component of neural progenitors-specific chromatin remodeling complex (npBAF complex) composed of at least, ARID1A/BAF250A or ARID1B/BAF250B, SMARCD1/BAF60A, SMARCD3/BAF60C, SMARCA2/BRM/BAF190B, SMARCA4/BRG1/BAF190A, SMARCB1/BAF47, SMARCC1/BAF155, SMARCE1/BAF57, SMARCC2/BAF170, PHF10/BAF45A, ACTL6A/BAF53A and actin. Component of neuron-specific chromatin remodeling complex (nBAF complex) composed of at least, ARID1A/BAF250A or ARID1B/BAF250B, SMARCD1/BAF60A, SMARCD3/BAF60C, SMARCA2/BRM/BAF190B, SMARCA4/BRG1/BAF190A, SMARCB1/BAF47, SMARCC1/BAF155, SMARCE1/BAF57, SMARCC2/BAF170, DPF1/BAF45B, DPF3/BAF45C, ACTL6B/BAF53B and actin. Component of the SWI/SNF-B (PBAF) chromatin remodeling complex, at least composed of SMARCA4/BRG1, SMARCB1/BAF47/SNF5, ACTL6A/BAF53A or ACTL6B/BAF53B, SMARCE1/BAF57, SMARCD1/BAF60A, SMARCD2/BAF60B, perhaps SMARCD3/BAF60C, SMARCC1/BAF155, SMARCC2/BAF170, PBRM1/BAF180, ARID2/BAF200 and actin (ACTB). Component of SWI/SNF (GBAF) subcomplex, which includes at least BICRA or BICRAL (mutually exclusive), BRD9, SS18, SMARCA2/BRM, SMARCA4/BRG1/BAF190A, ACTL6A/BAF53, SMARCC1/BAF155, and SMARCD1/BAF60A. Specifically interacts with the VDR heterodimer complex. Interacts with ESR1, NR3C1, NR1H4, PGR, SMARCA4, SMARCC1 and SMARCC2. Interacts with DPF2. Interacts with DPF3a (isoform 2 of DPF3/BAF45C) and with HDGFL2 in a DPF3a-dependent manner. Interacts with FOS, FOSB isoform 1 and 2, FOSL1 and FOSL2. Expressed in all tissues tested, including brain, heart, kidney, liver, lung, muscle, pancreas and placenta.

The protein resides in the nucleus. Involved in transcriptional activation and repression of select genes by chromatin remodeling (alteration of DNA-nucleosome topology). Component of SWI/SNF chromatin remodeling complexes that carry out key enzymatic activities, changing chromatin structure by altering DNA-histone contacts within a nucleosome in an ATP-dependent manner. Belongs to the neural progenitors-specific chromatin remodeling complex (npBAF complex) and the neuron-specific chromatin remodeling complex (nBAF complex). During neural development a switch from a stem/progenitor to a postmitotic chromatin remodeling mechanism occurs as neurons exit the cell cycle and become committed to their adult state. The transition from proliferating neural stem/progenitor cells to postmitotic neurons requires a switch in subunit composition of the npBAF and nBAF complexes. As neural progenitors exit mitosis and differentiate into neurons, npBAF complexes which contain ACTL6A/BAF53A and PHF10/BAF45A, are exchanged for homologous alternative ACTL6B/BAF53B and DPF1/BAF45B or DPF3/BAF45C subunits in neuron-specific complexes (nBAF). The npBAF complex is essential for the self-renewal/proliferative capacity of the multipotent neural stem cells. The nBAF complex along with CREST plays a role regulating the activity of genes essential for dendrite growth. Has a strong influence on vitamin D-mediated transcriptional activity from an enhancer vitamin D receptor element (VDRE). May be a link between mammalian SWI-SNF-like chromatin remodeling complexes and the vitamin D receptor (VDR) heterodimer. Mediates critical interactions between nuclear receptors and the BRG1/SMARCA4 chromatin-remodeling complex for transactivation. Interacts with AKIRIN2. The protein is SWI/SNF-related matrix-associated actin-dependent regulator of chromatin subfamily D member 1 of Homo sapiens (Human).